A 5100-amino-acid polypeptide reads, in one-letter code: Hemicentin-2 (5100 aa).

The first 19 residues, 1-19, serve as a signal peptide directing secretion; the sequence is MTPGAQLLPLLVAISTAVA. The 175-residue stretch at 37–211 folds into the VWFA domain; sequence DATLAFVFDV…QVSEVLKWVE (175 aa). Residues N330, N347, N380, N479, N526, N548, and N675 are each glycosylated (N-linked (GlcNAc...) asparagine). Ig-like C2-type domains follow at residues 426–515, 517–601, 609–692, 699–782, 787–877, 882–968, 973–1058, 1063–1156, 1161–1239, 1246–1335, 1340–1437, 1442–1531, 1536–1624, 1629–1717, 1722–1810, 1825–1913, 1920–2008, 2011–2100, 2105–2189, 2196–2285, 2290–2379, 2384–2473, 2478–2566, 2571–2662, 2667–2758, 2781–2871, 2875–2964, 2971–3058, 3063–3153, 3157–3245, 3250–3340, 3345–3432, 3438–3523, 3528–3609, 3614–3702, 3707–3793, 3798–3886, 3891–3977, 3982–4067, 4071–4158, 4163–4244, 4252–4336, and 4343–4428; these read PGVP…IVIT, PPPQ…RATT, PQVS…ETVT, PSVS…IQLV, PRLT…LVVT, PQIA…VELV, PRIH…MWLS, PMIK…YVLR, PQVQ…WKLE, PHWG…AKLV, PSIR…FNLA, PSLL…FQLS, PTIW…TSLE, PTIE…YSVE, PQLL…VEVS, SAHH…KDVT, PNIE…LRVN, PRIT…VILQ, PSIL…KHFN, PAFP…QSLE, PQVT…FALS, PHLT…FSVE, PSIE…TQLS, PTIL…YHVE, PSIS…QDFN, PHEE…YELL, PPVI…KLFT, PQIS…VQLN, PSFK…FVLA, PPTF…FVVS, PQIQ…HTVN, PTIK…RNFT, PPIL…FQLT, PHIE…FRVR, PNVV…FRVE, PTIQ…LDLR, PAIA…YQVT, PTIA…MVLT, PVVK…TRLV, PPVI…VHLT, PVLT…QAVS, PVLQ…KVVT, and PVFQ…ALLA. The cysteines at positions 449 and 497 are disulfide-linked. Disulfide bonds link C539-C588, C630-C678, C720-C766, C808-C859, C903-C952, and C994-C1042. An omega-N-methylarginine mark is found at R909, R914, and R915. N-linked (GlcNAc...) asparagine glycosylation is found at N1024 and N1068. Intrachain disulfides connect C1091-C1140 and C1182-C1225. The N-linked (GlcNAc...) asparagine glycan is linked to N1264. The segment at 1265-1293 is disordered; the sequence is ASLPCPAQGTPKPRITWRRGPSSEPLNGR. C1269 and C1319 are joined by a disulfide. A glycan (N-linked (GlcNAc...) asparagine) is linked at N1350. 2 disulfide bridges follow: C1363–C1421 and C1465–C1515. Residue N1542 is glycosylated (N-linked (GlcNAc...) asparagine). 4 disulfide bridges follow: C1559–C1608, C1653–C1701, C1745–C1794, and C1846–C1899. Residues N1676 and N1787 are each glycosylated (N-linked (GlcNAc...) asparagine). An N-linked (GlcNAc...) asparagine glycan is attached at N1934. 2 disulfide bridges follow: C1941–C1990 and C2033–C2084. 3 N-linked (GlcNAc...) asparagine glycosylation sites follow: N2034, N2113, and N2119. 2 disulfide bridges follow: C2126–C2175 and C2218–C2269. N2309, N2315, N2345, and N2395 each carry an N-linked (GlcNAc...) asparagine glycan. Residues C2314 and C2363 are joined by a disulfide bond. C2408 and C2457 form a disulfide bridge. N-linked (GlcNAc...) asparagine glycosylation is found at N2469, N2502, N2541, N2606, and N2688. 2 cysteine pairs are disulfide-bonded: C2501–C2550 and C2597–C2646. 2 cysteine pairs are disulfide-bonded: C2695/C2744 and C2806/C2855. Residue N2892 is glycosylated (N-linked (GlcNAc...) asparagine). C2901 and C2950 are oxidised to a cystine. A glycan (N-linked (GlcNAc...) asparagine) is linked at N2986. Cystine bridges form between C2993/C3042, C3088/C3137, C3180/C3229, C3273/C3324, and C3369/C3418. N-linked (GlcNAc...) asparagine glycosylation occurs at N3430. Cystine bridges form between C3462–C3507, C3551–C3593, and C3637–C3686. N3560 and N3575 each carry an N-linked (GlcNAc...) asparagine glycan. N-linked (GlcNAc...) asparagine glycosylation is found at N3717 and N3721. An intrachain disulfide couples C3728 to C3777. N-linked (GlcNAc...) asparagine glycosylation is present at N3806. Disulfide bonds link C3819-C3870, C3912-C3961, C4003-C4051, C4093-C4142, C4184-C4231, C4274-C4322, and C4364-C4412. N4304 carries N-linked (GlcNAc...) asparagine glycosylation. Positions 4432–4654 constitute a Nidogen G2 beta-barrel domain; the sequence is EPRGSRGSMT…QTEENEVGCP (223 aa). N4455 and N4601 each carry an N-linked (GlcNAc...) asparagine glycan. Positions 4668 to 4708 constitute an EGF-like 1; calcium-binding domain; the sequence is DKDECSGGPSPCSHTCRNAPGHFSCSCPTGFSLAWDHRNCR. Intrachain disulfides connect C4672–C4683, C4679–C4692, C4694–C4707, C4713–C4726, C4720–C4735, C4739–C4752, C4758–C4771, C4765–C4780, C4801–C4812, C4808–C4821, and C4823–C4836. The EGF-like 2; calcium-binding domain occupies 4709–4753; the sequence is DVDECAGNTHLCQEEQRCVNLLGSYNCLASCRPGFRVTADGSNCE. Positions 4754–4789 constitute an EGF-like 3; calcium-binding domain; sequence DVDECLEQLDECHYNQLCENTPGGHHCGCPRGYRQQ. One can recognise an EGF-like 4; calcium-binding domain in the interval 4797–4837; that stretch reads DINECLQLPTPCVYQCQNLQGSYRCLCPPGQTLLRDGRTCI. Residue N4845 is glycosylated (N-linked (GlcNAc...) asparagine). The EGF-like 5; calcium-binding domain maps to 4904–4943; that stretch reads DLDECRVRSLCQHACQNTEGSYYCLCPSGYRLLPSGKNCQ. 3 cysteine pairs are disulfide-bonded: C4908/C4918, C4914/C4927, and C4929/C4942. N-linked (GlcNAc...) asparagine glycosylation occurs at N5035.

Reported to be phosphorylated; however as this position is extracellular, the in vivo relevance is unsure. As to expression, in neonatal skin, localized in the pericellular space of basal epidermal keratinocytes (at protein level). In adult skin, restricted to basal keratinocytes of hair follicles and the interfollicular epidermis. Absent from the myotendinous junction but present in skeletal muscle (at protein level). Expressed in the pericellular extracellular matrix of epithelial cells in a number of tissues including embryonic trophectoderm and adult skin and tongue. Also present in the extracellular matrix of some, but not all, blood vessels. Expressed primarily in epithelial cells in the embryonic epidermis, lung, intestine, skeletal hindlimb muscle, tongue and the muscular layers of the esophagus.

It is found in the secreted. It localises to the extracellular space. The protein resides in the extracellular matrix. The protein localises to the cleavage furrow. This Mus musculus (Mouse) protein is Hemicentin-2 (Hmcn2).